The following is a 179-amino-acid chain: Large ribosomal subunit protein uL6 (179 aa).

Belongs to the universal ribosomal protein uL6 family. Part of the 50S ribosomal subunit.

In terms of biological role, this protein binds to the 23S rRNA, and is important in its secondary structure. It is located near the subunit interface in the base of the L7/L12 stalk, and near the tRNA binding site of the peptidyltransferase center. The chain is Large ribosomal subunit protein uL6 from Buchnera aphidicola subsp. Baizongia pistaciae (strain Bp).